The following is a 121-amino-acid chain: Ribosome-binding factor A (121 aa).

It belongs to the RbfA family. As to quaternary structure, monomer. Binds 30S ribosomal subunits, but not 50S ribosomal subunits or 70S ribosomes.

The protein resides in the cytoplasm. Functionally, one of several proteins that assist in the late maturation steps of the functional core of the 30S ribosomal subunit. Associates with free 30S ribosomal subunits (but not with 30S subunits that are part of 70S ribosomes or polysomes). Required for efficient processing of 16S rRNA. May interact with the 5'-terminal helix region of 16S rRNA. In Lactobacillus acidophilus (strain ATCC 700396 / NCK56 / N2 / NCFM), this protein is Ribosome-binding factor A.